We begin with the raw amino-acid sequence, 611 residues long: Protein halfway (611 aa).

Positions 1 to 22 (MLAYTHGTWLLLLLLLVAGACA) are cleaved as a signal peptide. Disordered stretches follow at residues 31-64 (DPAALGEESTPHAHAHPQARHHHHAHPHAPLKED), 90-132 (SLAE…AAPE), and 154-185 (GRAETSEGQGSTVAQSEAQNRGGQGNSQCQCR). Basic residues predominate over residues 43-59 (AHAHPQARHHHHAHPHA). Over residues 90–101 (SLAETQSMSDPG) the composition is skewed to polar residues. Residues 102 to 123 (SVTDTTSTSTSHSTSTTSTTSP) show a composition bias toward low complexity. The segment covering 159–183 (SEGQGSTVAQSEAQNRGGQGNSQCQ) has biased composition (polar residues). N-linked (GlcNAc...) asparagine glycosylation is found at Asn-221, Asn-246, Asn-264, and Asn-269. 4 LRR repeats span residues 236–257 (SLQSLAVTDGNITRLVNAFPRL), 259–280 (ALKCLNISNNNISEIHSRAVKD), 283–304 (HLEFFGMSNNNLSLVPHRNQNK), and 313–334 (NMRMLCTPLNEIIYTESINFLN). The 56-residue stretch at 361 to 416 (ENRKRCVTNCPVIPNYGSCNCTLENIMIIQDNQSKPQCHVDCSNLGLVELPQRLPD) folds into the LRRNT domain. LRR repeat units follow at residues 417 to 438 (NTFMLNITNNKITSLGDYFHTN), 443 to 464 (NINRLLADNNQISSIYEFEGTK), and 468 to 489 (TFQRIYMRNNSLSKIPEYFLNN). In terms of domain architecture, LRRCT spans 505–554 (NKLQCDCNSAKTLQNWLKERSSDIPDYMEIRCRNMPQRVIELQEAKLCQS).

Has a role in the ecdysone induced cascade; probably indirect control of 'late' ecdysone genes. The polypeptide is Protein halfway (Drosophila melanogaster (Fruit fly)).